The primary structure comprises 202 residues: Alpha-S1-casein (202 aa).

Disordered stretches follow at residues 1-25 (RPKL…VLKE) and 51-84 (LKEK…VVPI). Composition is skewed to basic and acidic residues over residues 16-25 (QDSREKVLKE) and 51-63 (LKEK…KEYL). At Ser-18 the chain carries Phosphoserine. The span at 70 to 80 (QESSSTSSSEE) shows a compositional bias: low complexity. Phosphoserine occurs at positions 72, 73, 74, 76, 77, and 78.

It belongs to the alpha-casein family. In terms of tissue distribution, mammary gland specific. Secreted in milk.

Its subcellular location is the secreted. Functionally, important role in the capacity of milk to transport calcium phosphate. This is Alpha-S1-casein from Equus asinus (Donkey).